We begin with the raw amino-acid sequence, 406 residues long: Arginine deiminase (406 aa).

Catalysis depends on C396, which acts as the Amidino-cysteine intermediate.

This sequence belongs to the arginine deiminase family.

It is found in the cytoplasm. The enzyme catalyses L-arginine + H2O = L-citrulline + NH4(+). It functions in the pathway amino-acid degradation; L-arginine degradation via ADI pathway; carbamoyl phosphate from L-arginine: step 1/2. The polypeptide is Arginine deiminase (Aliivibrio fischeri (strain MJ11) (Vibrio fischeri)).